Reading from the N-terminus, the 503-residue chain is Maturase K (503 aa).

Belongs to the intron maturase 2 family. MatK subfamily.

The protein localises to the plastid. It is found in the chloroplast. Functionally, usually encoded in the trnK tRNA gene intron. Probably assists in splicing its own and other chloroplast group II introns. The sequence is that of Maturase K from Liquidambar formosana (Formosan gum).